The following is a 235-amino-acid chain: Probable septum site-determining protein MinC (235 aa).

The disordered stretch occupies residues 104-125 (KAVRPAPVEPATPSEPPQNANP). Residues 110–119 (PVEPATPSEP) are compositionally biased toward pro residues.

The protein belongs to the MinC family. Interacts with MinD and FtsZ.

Its function is as follows. Cell division inhibitor that blocks the formation of polar Z ring septums. Rapidly oscillates between the poles of the cell to destabilize FtsZ filaments that have formed before they mature into polar Z rings. Prevents FtsZ polymerization. In Salmonella enteritidis PT4 (strain P125109), this protein is Probable septum site-determining protein MinC.